The chain runs to 932 residues: RNA-binding protein 12 (932 aa).

A disordered region spans residues 97–116; it reads IPPANASRSGPPPSSGMSGR. Residues 98 to 116 show a composition bias toward low complexity; that stretch reads PPANASRSGPPPSSGMSGR. The 76-residue stretch at 304–379 folds into the RRM 1 domain; that stretch reads LYVSVHGMPF…RYVEVSPATE (76 aa). A phosphoserine mark is found at Ser352 and Ser375. Residues 393–424 form a disordered region; it reads QNMGPSGQSHPPPQTLPRSKSPSGQKRSRSRS. A compositionally biased stretch (polar residues) spans 408 to 417; sequence LPRSKSPSGQ. Phosphoserine occurs at positions 420, 422, and 424. The RRM 2 domain occupies 430–507; that stretch reads FCVYLKGLPF…RFIQVHPITK (78 aa). At Ser525 the chain carries Phosphoserine. The segment covering 717–734 has biased composition (low complexity); sequence NGPPFNFPGNFGGSNAFG. Residues 717 to 853 are disordered; sequence NGPPFNFPGN…PGFASSSGKP (137 aa). Residues 783 to 811 show a composition bias toward gly residues; it reads SGFGGGPQNFGNGPGSLGGPPGFGSGPPG. The segment covering 824–836 has biased composition (pro residues); sequence AFGPGPGPGPGPG. The RRM 3 domain maps to 856 to 932; it reads TVIKVQNMPF…GSRKVKLVLG (77 aa).

The protein localises to the nucleus. In Macaca mulatta (Rhesus macaque), this protein is RNA-binding protein 12 (RBM12).